The chain runs to 634 residues: Kinesin-like protein KIF22 (634 aa).

Residues 19–345 (RVRVAVRLRP…LNFAAKSKQI (327 aa)) enclose the Kinesin motor domain. 103 to 110 (GPTGAGKT) serves as a coordination point for ATP. A disordered region spans residues 357 to 406 (APTIAPGKRTREEQEAGGSGEPQNKRSKEGKKAEHSPSPPLHPQSSPDSS). The span at 379–391 (QNKRSKEGKKAEH) shows a compositional bias: basic and acidic residues. Residues 421–471 (SAERERLNLLKTVAQSRKEIQMLKEKQKELEDKANMFNKQKETTEKESKDA) adopt a coiled-coil conformation.

Belongs to the TRAFAC class myosin-kinesin ATPase superfamily. Kinesin family. Ubiquitinated, leading to its subsequent proteasomal degradation.

It localises to the nucleus. The protein localises to the cytoplasm. Its subcellular location is the cytoskeleton. Its function is as follows. Kinesin family member that is involved in spindle formation and the movements of chromosomes during mitosis and meiosis. Binds to microtubules and to DNA. The protein is Kinesin-like protein KIF22 (kif22) of Danio rerio (Zebrafish).